Here is a 319-residue protein sequence, read N- to C-terminus: Acetyl-coenzyme A carboxylase carboxyl transferase subunit alpha (319 aa).

The CoA carboxyltransferase C-terminal domain maps to 38 to 292 (ALDKKAADLL…GKAIASMLAG (255 aa)).

The protein belongs to the AccA family. As to quaternary structure, acetyl-CoA carboxylase is a heterohexamer composed of biotin carboxyl carrier protein (AccB), biotin carboxylase (AccC) and two subunits each of ACCase subunit alpha (AccA) and ACCase subunit beta (AccD).

It is found in the cytoplasm. It carries out the reaction N(6)-carboxybiotinyl-L-lysyl-[protein] + acetyl-CoA = N(6)-biotinyl-L-lysyl-[protein] + malonyl-CoA. It functions in the pathway lipid metabolism; malonyl-CoA biosynthesis; malonyl-CoA from acetyl-CoA: step 1/1. In terms of biological role, component of the acetyl coenzyme A carboxylase (ACC) complex. First, biotin carboxylase catalyzes the carboxylation of biotin on its carrier protein (BCCP) and then the CO(2) group is transferred by the carboxyltransferase to acetyl-CoA to form malonyl-CoA. This chain is Acetyl-coenzyme A carboxylase carboxyl transferase subunit alpha, found in Jannaschia sp. (strain CCS1).